The primary structure comprises 79 residues: Envelope small membrane protein (79 aa).

Topologically, residues 1-16 (MYDIVGTNNSILIANV) are virion surface. Residues 17–37 (LVLIIICLLVVIVGCALLLIL) form a helical membrane-spanning segment. Topologically, residues 38-75 (QFVFGVCGFVFKFVCKPTILVYNKFRNESLLNEREELL) are intravirion.

The protein belongs to the betacoronaviruses E protein family. As to quaternary structure, homopentamer. Interacts with membrane protein M in the budding compartment of the host cell, which is located between endoplasmic reticulum and the Golgi complex. Interacts with Nucleoprotein.

The protein localises to the host Golgi apparatus membrane. Functionally, plays a central role in virus morphogenesis and assembly. Acts as a viroporin and self-assembles in host membranes forming pentameric protein-lipid pores that allow ion transport. Also plays a role in the induction of apoptosis. The sequence is that of Envelope small membrane protein from Rousettus leschenaultii (Leschenault's rousette).